A 607-amino-acid polypeptide reads, in one-letter code: Elongation factor 4 (607 aa).

The 183-residue stretch at 11–193 folds into the tr-type G domain; sequence EKIRNFSIIA…QIVEKVPAPQ (183 aa). Residues 23-28 and 140-143 each bind GTP; these read DHGKST and NKID.

This sequence belongs to the TRAFAC class translation factor GTPase superfamily. Classic translation factor GTPase family. LepA subfamily.

It is found in the cell membrane. The catalysed reaction is GTP + H2O = GDP + phosphate + H(+). Functionally, required for accurate and efficient protein synthesis under certain stress conditions. May act as a fidelity factor of the translation reaction, by catalyzing a one-codon backward translocation of tRNAs on improperly translocated ribosomes. Back-translocation proceeds from a post-translocation (POST) complex to a pre-translocation (PRE) complex, thus giving elongation factor G a second chance to translocate the tRNAs correctly. Binds to ribosomes in a GTP-dependent manner. The protein is Elongation factor 4 of Lactococcus lactis subsp. lactis (strain IL1403) (Streptococcus lactis).